Consider the following 253-residue polypeptide: MLKLARPFIPPLSRNNAISSGIVLTSRRFQSSFTFLSNQSLLSKNQMKSKRKKGSKKAAYHRQPPEHEHTAPLIKQNKTITKKEHSDVRGSHLKKKRSDFSWLPRVPSTSHLKQSDMTTNVLYSGYRPLFINPNDPKLKEDTGSTLYEFAMKLEDLNEPLSPWISSATGLEFFSEWENIPSELLKNLKPFHPPKEKSMNTNELIHVSAKRNTLVDNKTSETLQRKMDEFSKRRGKGRKKSVVTLLQMKKKLEG.

Residues 1-36 (MLKLARPFIPPLSRNNAISSGIVLTSRRFQSSFTFL) constitute a mitochondrion transit peptide. Positions 44 to 93 (KNQMKSKRKKGSKKAAYHRQPPEHEHTAPLIKQNKTITKKEHSDVRGSHL) are disordered. The segment covering 47-60 (MKSKRKKGSKKAAY) has biased composition (basic residues). Positions 81–90 (TKKEHSDVRG) are enriched in basic and acidic residues.

The protein localises to the mitochondrion. Required for respiratory growth, stability of the mitochondrial genome and for proper assembly or maintenance of mitochondrial proteins. The sequence is that of Protein PET20, mitochondrial (PET20) from Saccharomyces cerevisiae (strain ATCC 204508 / S288c) (Baker's yeast).